Here is a 308-residue protein sequence, read N- to C-terminus: uncharacterized protein (308 aa).

This is an uncharacterized protein from Ictalurid herpesvirus 1 (strain Auburn) (IcHV-1).